Here is a 1178-residue protein sequence, read N- to C-terminus: DNA-directed RNA polymerase subunit beta' (1178 aa).

Cys60, Cys62, Cys75, and Cys78 together coordinate Zn(2+). Residues Asp450, Asp452, and Asp454 each contribute to the Mg(2+) site. Residues Cys795, Cys869, Cys876, and Cys879 each coordinate Zn(2+).

It belongs to the RNA polymerase beta' chain family. As to quaternary structure, the RNAP catalytic core consists of 2 alpha, 1 beta, 1 beta' and 1 omega subunit. When a sigma factor is associated with the core the holoenzyme is formed, which can initiate transcription. Requires Mg(2+) as cofactor. The cofactor is Zn(2+).

The enzyme catalyses RNA(n) + a ribonucleoside 5'-triphosphate = RNA(n+1) + diphosphate. Its function is as follows. DNA-dependent RNA polymerase catalyzes the transcription of DNA into RNA using the four ribonucleoside triphosphates as substrates. In Clostridium botulinum (strain ATCC 19397 / Type A), this protein is DNA-directed RNA polymerase subunit beta'.